We begin with the raw amino-acid sequence, 235 residues long: 1-(5-phosphoribosyl)-5-[(5-phosphoribosylamino)methylideneamino] imidazole-4-carboxamide isomerase (235 aa).

D8 (proton acceptor) is an active-site residue. D128 functions as the Proton donor in the catalytic mechanism.

Belongs to the HisA/HisF family.

The protein localises to the cytoplasm. The enzyme catalyses 1-(5-phospho-beta-D-ribosyl)-5-[(5-phospho-beta-D-ribosylamino)methylideneamino]imidazole-4-carboxamide = 5-[(5-phospho-1-deoxy-D-ribulos-1-ylimino)methylamino]-1-(5-phospho-beta-D-ribosyl)imidazole-4-carboxamide. Its pathway is amino-acid biosynthesis; L-histidine biosynthesis; L-histidine from 5-phospho-alpha-D-ribose 1-diphosphate: step 4/9. This is 1-(5-phosphoribosyl)-5-[(5-phosphoribosylamino)methylideneamino] imidazole-4-carboxamide isomerase from Thermus thermophilus (strain ATCC BAA-163 / DSM 7039 / HB27).